Consider the following 321-residue polypeptide: Lipoyl synthase (321 aa).

Residues Cys68, Cys73, Cys79, Cys94, Cys98, Cys101, and Ser308 each contribute to the [4Fe-4S] cluster site. The 218-residue stretch at 80 to 297 folds into the Radical SAM core domain; the sequence is FNHGTATFMI…KAYADEIGFT (218 aa).

The protein belongs to the radical SAM superfamily. Lipoyl synthase family. The cofactor is [4Fe-4S] cluster.

The protein resides in the cytoplasm. The catalysed reaction is [[Fe-S] cluster scaffold protein carrying a second [4Fe-4S](2+) cluster] + N(6)-octanoyl-L-lysyl-[protein] + 2 oxidized [2Fe-2S]-[ferredoxin] + 2 S-adenosyl-L-methionine + 4 H(+) = [[Fe-S] cluster scaffold protein] + N(6)-[(R)-dihydrolipoyl]-L-lysyl-[protein] + 4 Fe(3+) + 2 hydrogen sulfide + 2 5'-deoxyadenosine + 2 L-methionine + 2 reduced [2Fe-2S]-[ferredoxin]. Its pathway is protein modification; protein lipoylation via endogenous pathway; protein N(6)-(lipoyl)lysine from octanoyl-[acyl-carrier-protein]: step 2/2. In terms of biological role, catalyzes the radical-mediated insertion of two sulfur atoms into the C-6 and C-8 positions of the octanoyl moiety bound to the lipoyl domains of lipoate-dependent enzymes, thereby converting the octanoylated domains into lipoylated derivatives. The sequence is that of Lipoyl synthase from Pseudoalteromonas translucida (strain TAC 125).